Here is a 421-residue protein sequence, read N- to C-terminus: 3-isopropylmalate dehydratase large subunit (421 aa).

Residues C302, C362, and C365 each contribute to the [4Fe-4S] cluster site.

This sequence belongs to the aconitase/IPM isomerase family. LeuC type 2 subfamily. As to quaternary structure, heterodimer of LeuC and LeuD. Requires [4Fe-4S] cluster as cofactor.

It catalyses the reaction (2R,3S)-3-isopropylmalate = (2S)-2-isopropylmalate. It participates in amino-acid biosynthesis; L-leucine biosynthesis; L-leucine from 3-methyl-2-oxobutanoate: step 2/4. Its function is as follows. Catalyzes the isomerization between 2-isopropylmalate and 3-isopropylmalate, via the formation of 2-isopropylmaleate. The polypeptide is 3-isopropylmalate dehydratase large subunit (Nitratiruptor sp. (strain SB155-2)).